A 347-amino-acid chain; its full sequence is Gibberellin 3-beta-dioxygenase 2 (347 aa).

Residues 197 to 301 (DFQGTQAVIQ…RFSMAYLWGP (105 aa)) form the Fe2OG dioxygenase domain. Residues His225, Asp227, and His282 each coordinate Fe cation. The active site involves Arg292. Position 292 (Arg292) interacts with 2-oxoglutarate.

This sequence belongs to the iron/ascorbate-dependent oxidoreductase family. GA3OX subfamily. L-ascorbate is required as a cofactor. The cofactor is Fe(2+). As to expression, highly expressed in seedlings but also expressed in roots, leaves, stems, flowers, siliques and seeds. Detected predominantly in the hypocotyl and roots of young seedlings and in the petioles and vasculature of leaves. Not expressed in the shoot apical meristem, but found in the elongation zone, the quiescent center cells and the columella cells of the root tips. Found in the cortex and the endodermis of the embryo axis in germinating seeds.

The catalysed reaction is gibberellin A20 + 2-oxoglutarate + O2 = gibberellin A1 + succinate + CO2. It functions in the pathway plant hormone biosynthesis; gibberellin biosynthesis. Its function is as follows. Converts the inactive gibberellin (GA) precursors GA9 and GA20 in the bioactives gibberellins GA4 and GA1. Involved in the production of bioactive GA for vegetative growth and development. This Arabidopsis thaliana (Mouse-ear cress) protein is Gibberellin 3-beta-dioxygenase 2.